Here is a 327-residue protein sequence, read N- to C-terminus: Methionyl-tRNA formyltransferase (327 aa).

(6S)-5,6,7,8-tetrahydrofolate is bound at residue 121–124 (SLLP).

It belongs to the Fmt family.

The catalysed reaction is L-methionyl-tRNA(fMet) + (6R)-10-formyltetrahydrofolate = N-formyl-L-methionyl-tRNA(fMet) + (6S)-5,6,7,8-tetrahydrofolate + H(+). In terms of biological role, attaches a formyl group to the free amino group of methionyl-tRNA(fMet). The formyl group appears to play a dual role in the initiator identity of N-formylmethionyl-tRNA by promoting its recognition by IF2 and preventing the misappropriation of this tRNA by the elongation apparatus. In Paraburkholderia phymatum (strain DSM 17167 / CIP 108236 / LMG 21445 / STM815) (Burkholderia phymatum), this protein is Methionyl-tRNA formyltransferase.